The following is a 169-amino-acid chain: uncharacterized protein (169 aa).

A compositionally biased stretch (low complexity) spans 144–157 (AEAHSASPASSDSS). The segment at 144–169 (AEAHSASPASSDSSPLTNNIRPISIM) is disordered. A compositionally biased stretch (polar residues) spans 158 to 169 (PLTNNIRPISIM).

This is an uncharacterized protein from Saccharomyces cerevisiae (strain ATCC 204508 / S288c) (Baker's yeast).